Here is a 1341-residue protein sequence, read N- to C-terminus: MPVSTALHQDGSQERPRSLVSTTSSSGSSRDSHSAMEEPTGSEASAQNGTGSPWDRHVPNSNNNSSGWLNMKGPLSPFNGRAGTSPAYHKLSYLGRVVREIVETERMYVQDLRSIVEDYLLKIIDTPGLLKPEQVSALFGNIESIYALNSQLLRDLDSCNSDPVAVASCFVERSQEFDIYTQYCNNYPNSVAALTECMQDKQQAKFFRDRQELLQHSLPLGSYLLKPVQRVLKYHLLLQEIAKHFDEEEDGFEVVEDAIDTMTCVAWYINDMKRRHEHAVRLQEIQSLLINWKGPDLTTYGELVLEATFRVHRVRNDRTFFLFDKILLITKKRGDHFVYKGHIPCSSLMLIESTRDSLCFTVTHYKHSKQQYSIQAKTVEEKRSWTHHIKRLILENHHATIPQKAKEAILEMDSYYPSRYRCSPERMKKAWSSQDEVSSHVRQGRRQSEPGHTLFSRATLPSRQQGFEMPGLKGRRKSEPTRHLLRQLSEKARAVGMKHAGSAGALLDFGQPAHAQKQQPEAERAAREELEEEEELVEEEEQRQQSFSGSLEGLAGHDGSEKVPGPELPGSEEEEEEEESLAVAEQGKRHRESEGSKGCRRPSNRSPTSAEKRMSFESVSSLPEVETDPEPGAEQEAFAALEGPSTEEMPSDPEFPEALETQLHAPKGLLGVDNPAAVVDFVEPEGSEDLKPLSSEEEEEEEMEAAQEPESLLPPSVLDQASVIAERFASSFSRRSSLAIEDGKSSGLGTPRLISRSSSVLSLEGSDKGLARWSSIGDSLSNPPTPEVIIGADMVTDNGPSVNGTESPSAGSGCPTEQDRSSCKKKESALSTRDRQLLDKIKNYYENAEHHDAGFSIRRRESLSYIPKGLVRSSVSRFNSLPKPDSEPAAPVGYKRPGSSRPASWTLFDLPGPRTDKGDPAPITDAEFCPSSEIAKIWERMESSERSPRTGSGQSQANGFELQEPLFILEEHELGAITEESAVASPESASPTEQPSPAHLARELKELVKELSSSVQGELVTPLHPRIVQLSHVMDSHVSERVKNKVYQLARQYSLRIKNIKAARPPLQWEKVTPDQEEQVPSISGLPEEAGELSGGKARRKPVLSLLSYEQLVAQEHGTSKSSAAVETSPRRFSFSPSAVSPRTTSPGARSSARSPLSPFDTETFNWPDVRELCSKYTSHDKTAQVESSWPRSLLVNRSRSLPENIVEPPMSGKADRCCGLNTHRRLGDGEASQPPLPESPPQSQLNGGDALYVTADLTLENNQRVIIMEKGPHPSSTVGLEEDSGKESSSPVALKGQGQGFQASAEYQPKEHGPRDSADTNKQGRVRNLREKFQALNSVG.

A disordered region spans residues 1 to 68 (MPVSTALHQD…PNSNNNSSGW (68 aa)). Residues 18–29 (SLVSTTSSSGSS) show a composition bias toward low complexity. Polar residues-rich tracts occupy residues 42-51 (SEASAQNGTG) and 59-68 (PNSNNNSSGW). At Ser76 the chain carries Phosphoserine. One can recognise a DH domain in the interval 93-272 (YLGRVVREIV…TCVAWYINDM (180 aa)). The 99-residue stretch at 296–394 (DLTTYGELVL…WTHHIKRLIL (99 aa)) folds into the PH domain. Phosphoserine occurs at positions 433 and 502. The tract at residues 433–482 (SQDEVSSHVRQGRRQSEPGHTLFSRATLPSRQQGFEMPGLKGRRKSEPTR) is disordered. Disordered stretches follow at residues 508-657 (DFGQ…EFPE) and 684-715 (PEGS…LLPP). Acidic residues-rich tracts occupy residues 529-541 (ELEE…EEEE) and 570-580 (GSEEEEEEEES). Phosphoserine occurs at positions 571, 694, 695, 737, 759, 762, and 766. Residues 695-707 (SEEEEEEEMEAAQ) are compositionally biased toward acidic residues. The tract at residues 775–832 (SIGDSLSNPPTPEVIIGADMVTDNGPSVNGTESPSAGSGCPTEQDRSSCKKKESALST) is disordered. A compositionally biased stretch (polar residues) spans 798–810 (NGPSVNGTESPSA). Residues 817–832 (EQDRSSCKKKESALST) are compositionally biased toward basic and acidic residues. Phosphoserine occurs at positions 862, 899, 900, and 947. Disordered stretches follow at residues 876-930 (SRFN…EFCP), 939-958 (ERME…SQAN), 1071-1097 (KVTP…SGGK), and 1117-1162 (HGTS…PFDT). The span at 939–948 (ERMESSERSP) shows a compositional bias: basic and acidic residues. Residues 949 to 958 (RTGSGQSQAN) are compositionally biased toward polar residues. Ser1129, Ser1134, Ser1136, Ser1141, Ser1155, Ser1158, and Ser1201 each carry phosphoserine. The segment covering 1135–1162 (FSPSAVSPRTTSPGARSSARSPLSPFDT) has biased composition (polar residues). 2 disordered regions span residues 1204–1249 (ENIV…LNGG) and 1271–1341 (KGPH…NSVG). Residues 1309–1320 (QPKEHGPRDSAD) show a composition bias toward basic and acidic residues.

It is found in the cytoplasm. Its subcellular location is the cytoskeleton. Its function is as follows. Plays a role in controlling cell polarity and cell motility by selectively binding newly polymerized actin and activating RAC1 and CDC42 to enhance local actin polymerization. In Mus musculus (Mouse), this protein is Pleckstrin homology domain-containing family G member 3.